A 331-amino-acid chain; its full sequence is MKQIIYITLAKNQEIEVWKLHDDFSLNLLQRISTQGEPQPIIISKDKKYLYIGVRPKFKVYSYKIKADGTLTKHACSTLPGSPNHFEIDHTGKYLFSSSYHFNCLSITPLDTLGIPRPVTQTIKNIFGCHASKMNCYNTCLFISALKKDCIYAYNFKKNGKLLKNTRKNFMTNVNFGPRHLDLQKCNNRLYSVNELNGSVDIWSINSFSNELILLKNINIMSKNYCNAAWSSDLHISPCEKFLYVSDRIENTISIIKLEKDVQNIEKIGHIKTELQPRTFSINSTGENLIVVGEKSNSFSVYKISKITGLLELKNTYSTGNRPVWISSLML.

The protein belongs to the cycloisomerase 2 family.

It carries out the reaction 6-phospho-D-glucono-1,5-lactone + H2O = 6-phospho-D-gluconate + H(+). Its pathway is carbohydrate degradation; pentose phosphate pathway; D-ribulose 5-phosphate from D-glucose 6-phosphate (oxidative stage): step 2/3. Functionally, catalyzes the hydrolysis of 6-phosphogluconolactone to 6-phosphogluconate. The protein is 6-phosphogluconolactonase of Buchnera aphidicola subsp. Baizongia pistaciae (strain Bp).